Here is a 2163-residue protein sequence, read N- to C-terminus: Myosin-VIIa (2163 aa).

The 671-residue stretch at 58–728 folds into the Myosin motor domain; it reads QGVEDMISLG…HDLFLEQERD (671 aa). 151–158 serves as a coordination point for ATP; it reads GESGAGKT. 2 actin-binding regions span residues 607-629 and 707-721; these read LDSL…KPNE and QLGH…AHDL. IQ domains are found at residues 731–753, 754–783, 800–822, and 823–852; these read LTRK…RFLR, MRQA…GYMR, LRGH…EYGL, and KMWA…EYRR. Residues 886 to 914 are a coiled coil; that stretch reads RLNEIERKEIEQELEERRRVEVKKNIIND. The interval 937–958 is disordered; that stretch reads PDSSSEAPTPHGGRETSVFNDL. Residues 1003 to 1239 form the MyTH4 1 domain; it reads YSRKPLKHPL…PSWLELQATK (237 aa). An FERM 1 domain is found at 1244-1554; that stretch reads IMLPITFMDG…YFLEGLKKRS (311 aa). The 70-residue stretch at 1552–1621 folds into the SH3 domain; the sequence is KRSKFVIALQ…PAEIVYVLPS (70 aa). The 149-residue stretch at 1697 to 1845 folds into the MyTH4 2 domain; it reads YSREPLKQPL…PHQVEVEAIQ (149 aa). Positions 1851–2154 constitute an FERM 2 domain; that stretch reads IFHKVYFPDD…SYISLMLTNM (304 aa).

This sequence belongs to the TRAFAC class myosin-kinesin ATPase superfamily. Myosin family. Homodimerizes in a two headed molecule through the formation of a coiled-coil rod.

The protein resides in the cytoplasm. Functionally, myosins are actin-based motor molecules with ATPase activity. Unconventional myosins serve in intracellular movements: can function in cells as a single-molecule cargo transporter. A very slow and high-duty-ratio motor, may be suitable for tension maintenance of actin filaments. Their highly divergent tails are presumed to bind to membranous compartments, which would be moved relative to actin filaments. Plays a key role in the formation of cellular projections and other actin-based functions required for embryonic and larval viability. Necessary for auditory transduction: plays a role in Johnston organ (JO) organization by functioning in scolopidial apical attachment and therefore to acoustic stimulus propagation from the antenna a2/a3 joint to transducing elements. This chain is Myosin-VIIa, found in Aedes aegypti (Yellowfever mosquito).